The primary structure comprises 267 residues: MAKLLLFLLPAILGLLVPPRSWSAVALGTNYLLSGQTLETEGHLKNGDFDLVMQDDCNLVLYNGNWQSNTANKGRDCKLTLTDHGELVINNGDGSTVWRSGAQSVKGDYAAVVHPEGRLVVFSPSVFKIDPSVPGLNSLRFRNIPFTNNLLFSGQVLYGDGRLTAKNHQLVMQGDCNLVLYGGKYGWQSNTHGNGEHCFLRLNHKGELIIEDDDFKTIWSSSYSSKQGDYVLILRDDGVAVIYGPAIWETSPQAKEKMIGMVTAGKL.

The first 26 residues, 1 to 26, serve as a signal peptide directing secretion; the sequence is MAKLLLFLLPAILGLLVPPRSWSAVA. Bulb-type lectin domains follow at residues 29-134 and 148-255; these read TNYL…PSVP and NNLL…PQAK. Residues 54–58, tyrosine 62, tryptophan 66, glutamine 67, 173–177, tyrosine 181, and 185–188 contribute to the beta-D-mannose site; these read QDDCN, QGDCN, and YGWQ. The Carbohydrate-binding motif 1 motif lies at 54-62; it reads QDDCNLVLY. Cystine bridges form between cysteine 57/cysteine 77 and cysteine 176/cysteine 198. Residues 173–181 carry the Carbohydrate-binding motif 2 motif; sequence QGDCNLVLY.

As to quaternary structure, forms heterotetramer of 2 chains 1 and 2 chains 2 arranged as a dimer of chain 1 and chain 2 heterodimers.

It is found in the secreted. In terms of biological role, mannose-specific lectin. Shows agglutinating activity towards erythrocytes from rabbit. The chain is Mannose-specific lectin 1 from Colocasia esculenta (Wild taro).